The chain runs to 424 residues: Tyrosine--tRNA ligase (424 aa).

Residue Y37 participates in L-tyrosine binding. A 'HIGH' region motif is present at residues P42–H51. Position 144 is an N6-acetyllysine (K144). L-tyrosine-binding residues include Y175 and Q179. The short motif at K235–T239 is the 'KMSKS' region element. K238 lines the ATP pocket. Residues A357 to G414 form the S4 RNA-binding domain.

It belongs to the class-I aminoacyl-tRNA synthetase family. TyrS type 1 subfamily. In terms of assembly, homodimer.

It localises to the cytoplasm. The catalysed reaction is tRNA(Tyr) + L-tyrosine + ATP = L-tyrosyl-tRNA(Tyr) + AMP + diphosphate + H(+). Functionally, catalyzes the attachment of tyrosine to tRNA(Tyr) in a two-step reaction: tyrosine is first activated by ATP to form Tyr-AMP and then transferred to the acceptor end of tRNA(Tyr). This chain is Tyrosine--tRNA ligase, found in Escherichia coli O8 (strain IAI1).